A 303-amino-acid polypeptide reads, in one-letter code: Sulfate adenylyltransferase subunit 2 (303 aa).

This sequence belongs to the PAPS reductase family. CysD subfamily. In terms of assembly, heterodimer composed of CysD, the smaller subunit, and CysN.

It carries out the reaction sulfate + ATP + H(+) = adenosine 5'-phosphosulfate + diphosphate. It participates in sulfur metabolism; hydrogen sulfide biosynthesis; sulfite from sulfate: step 1/3. In terms of biological role, with CysN forms the ATP sulfurylase (ATPS) that catalyzes the adenylation of sulfate producing adenosine 5'-phosphosulfate (APS) and diphosphate, the first enzymatic step in sulfur assimilation pathway. APS synthesis involves the formation of a high-energy phosphoric-sulfuric acid anhydride bond driven by GTP hydrolysis by CysN coupled to ATP hydrolysis by CysD. This Phocaeicola vulgatus (strain ATCC 8482 / DSM 1447 / JCM 5826 / CCUG 4940 / NBRC 14291 / NCTC 11154) (Bacteroides vulgatus) protein is Sulfate adenylyltransferase subunit 2.